Reading from the N-terminus, the 954-residue chain is Centrosomal protein of 112 kDa (954 aa).

The stretch at 276-954 forms a coiled coil; that stretch reads QKHDAEVQKI…EELTTYQSRR (679 aa).

It localises to the cytoplasm. It is found in the cytoskeleton. The protein localises to the microtubule organizing center. Its subcellular location is the centrosome. The polypeptide is Centrosomal protein of 112 kDa (Cep112) (Mus musculus (Mouse)).